We begin with the raw amino-acid sequence, 260 residues long: Taurine import ATP-binding protein TauB (260 aa).

One can recognise an ABC transporter domain in the interval A6–S235. G40–S47 is a binding site for ATP.

Belongs to the ABC transporter superfamily. Taurine importer (TC 3.A.1.17.1) family. As to quaternary structure, the complex is composed of two ATP-binding proteins (TauB), two transmembrane proteins (TauC) and a solute-binding protein (TauA).

The protein localises to the cell inner membrane. It carries out the reaction taurine(out) + ATP + H2O = taurine(in) + ADP + phosphate + H(+). Functionally, part of the ABC transporter complex TauABC involved in taurine import. Responsible for energy coupling to the transport system. This Burkholderia thailandensis (strain ATCC 700388 / DSM 13276 / CCUG 48851 / CIP 106301 / E264) protein is Taurine import ATP-binding protein TauB.